The primary structure comprises 182 residues: Bifunctional dihydrofolate reductase-thymidylate synthase (182 aa).

Residues 1–182 (AICACCKVLN…YFTRINNAYT (182 aa)) form the DHFR domain. 25-31 (GLGNAGG) is an NADP(+) binding site. Aspartate 40 lines the substrate pocket. Residues 93–95 (KTS) and 114–117 (LSRT) each bind NADP(+). Residues isoleucine 154, tyrosine 160, and threonine 175 each contribute to the substrate site. 155-162 (GGASVYKE) is an NADP(+) binding site.

In the N-terminal section; belongs to the dihydrofolate reductase family. This sequence in the C-terminal section; belongs to the thymidylate synthase family. Homodimer.

The enzyme catalyses (6S)-5,6,7,8-tetrahydrofolate + NADP(+) = 7,8-dihydrofolate + NADPH + H(+). The catalysed reaction is dUMP + (6R)-5,10-methylene-5,6,7,8-tetrahydrofolate = 7,8-dihydrofolate + dTMP. Its pathway is cofactor biosynthesis; tetrahydrofolate biosynthesis; 5,6,7,8-tetrahydrofolate from 7,8-dihydrofolate: step 1/1. Functionally, bifunctional enzyme. Involved in de novo dTMP biosynthesis. Key enzyme in folate metabolism. Catalyzes an essential reaction for de novo glycine and purine synthesis, DNA precursor synthesis, and for the conversion of dUMP to dTMP. The polypeptide is Bifunctional dihydrofolate reductase-thymidylate synthase (Plasmodium vinckei).